We begin with the raw amino-acid sequence, 342 residues long: Isopentenyl-diphosphate delta-isomerase (342 aa).

Substrate is bound at residue 12–13 (RK). FMN-binding positions include 71-73 (AMT), Ser101, and Asn129. Residue 101-103 (SQR) coordinates substrate. Gln163 provides a ligand contact to substrate. A Mg(2+)-binding site is contributed by Glu164. Residues Lys195, Thr225, 272–274 (GIR), and 293–294 (AR) contribute to the FMN site.

It belongs to the IPP isomerase type 2 family. Homooctamer. Dimer of tetramers. It depends on FMN as a cofactor. Requires NADPH as cofactor. The cofactor is Mg(2+).

It localises to the cytoplasm. The enzyme catalyses isopentenyl diphosphate = dimethylallyl diphosphate. Its function is as follows. Involved in the biosynthesis of isoprenoids. Catalyzes the 1,3-allylic rearrangement of the homoallylic substrate isopentenyl (IPP) to its allylic isomer, dimethylallyl diphosphate (DMAPP). This is Isopentenyl-diphosphate delta-isomerase from Mycolicibacterium vanbaalenii (strain DSM 7251 / JCM 13017 / BCRC 16820 / KCTC 9966 / NRRL B-24157 / PYR-1) (Mycobacterium vanbaalenii).